The sequence spans 537 residues: Prolyl 4-hydroxylase subunit alpha-2 (537 aa).

Residues 1-23 form the signal peptide; the sequence is MKLQVLVLVLLMSWFGVLSWVQA. N-linked (GlcNAc...) asparagine glycosylation is present at Asn-117. Residues 209 to 242 form a TPR repeat; it reads SLVLDYLSYAVFQLGDLHRAVELTRRLLSLDPSH. N-linked (GlcNAc...) asparagine glycosylation occurs at Asn-266. In terms of domain architecture, Fe2OG dioxygenase spans 414-522; sequence TAELLQVANY…KWVSNKWFHE (109 aa). The Fe cation site is built by His-432 and Asp-434. Lys-482 bears the N6-succinyllysine mark. Position 503 (His-503) interacts with Fe cation. Lys-513 contacts 2-oxoglutarate.

It belongs to the P4HA family. In terms of assembly, heterotetramer of two alpha-2 chains and two beta chains (P4HB) (the beta chain is the multi-functional PDI), where P4HB plays the role of a structural subunit; this tetramer catalyzes the formation of 4-hydroxyproline in collagen. It depends on Fe(2+) as a cofactor. L-ascorbate serves as cofactor. In terms of tissue distribution, expressed at least in brain, heart and lung.

It is found in the endoplasmic reticulum lumen. It carries out the reaction L-prolyl-[collagen] + 2-oxoglutarate + O2 = trans-4-hydroxy-L-prolyl-[collagen] + succinate + CO2. Its activity is regulated as follows. Inhibited by poly(L-proline) only at very high concentrations. Catalyzes the post-translational formation of 4-hydroxyproline in -Xaa-Pro-Gly- sequences in collagens and other proteins. The polypeptide is Prolyl 4-hydroxylase subunit alpha-2 (P4ha2) (Mus musculus (Mouse)).